A 305-amino-acid polypeptide reads, in one-letter code: Aspartate carbamoyltransferase catalytic subunit (305 aa).

Arg54 and Thr55 together coordinate carbamoyl phosphate. Lys83 lines the L-aspartate pocket. Carbamoyl phosphate is bound by residues Arg104, His132, and Gln135. L-aspartate is bound by residues Arg165 and Arg226. Positions 265 and 266 each coordinate carbamoyl phosphate.

Belongs to the aspartate/ornithine carbamoyltransferase superfamily. ATCase family. Heterooligomer of catalytic and regulatory chains.

The enzyme catalyses carbamoyl phosphate + L-aspartate = N-carbamoyl-L-aspartate + phosphate + H(+). It functions in the pathway pyrimidine metabolism; UMP biosynthesis via de novo pathway; (S)-dihydroorotate from bicarbonate: step 2/3. Functionally, catalyzes the condensation of carbamoyl phosphate and aspartate to form carbamoyl aspartate and inorganic phosphate, the committed step in the de novo pyrimidine nucleotide biosynthesis pathway. This is Aspartate carbamoyltransferase catalytic subunit from Pyrobaculum calidifontis (strain DSM 21063 / JCM 11548 / VA1).